A 1755-amino-acid polypeptide reads, in one-letter code: Transposon Ty1-PL Gag-Pol polyprotein (1755 aa).

Composition is skewed to polar residues over residues 1-23, 48-60, and 127-152; these read MESQ…SVTS, TKAN…TPAS, and QSQF…GNTF. Disordered regions lie at residues 1–93, 126–174, and 352–421; these read MESQ…MMTQ, PQSQ…PPPM, and GSRN…SKST. Over residues 153–165 the composition is skewed to low complexity; the sequence is TDSSSADSDMTST. Residues 299–401 are RNA-binding; it reads NNGIHINNKV…NSKSKTARAH (103 aa). A compositionally biased stretch (low complexity) spans 402-418; that stretch reads NVSTSNNSPSTDNDSIS. Ser416 is modified (phosphoserine). The For protease activity; shared with dimeric partner role is filled by Asp461. Positions 583-640 are integrase-type zinc finger-like; it reads NVHTSESTRKYPYPFIHRMLAHANAQTIRYSLKNNTITYFNESDVDWSSAIDYQCPDC. Positions 660–835 constitute an Integrase catalytic domain; that stretch reads NSYEPFQYLH…AGLDISTLLP (176 aa). Mg(2+)-binding residues include Asp671 and Asp736. 3 disordered regions span residues 956–1087, 1092–1111, and 1130–1187; these read SKAV…ETEK, RSPS…NIVP, and DLPL…DNET. Positions 960–969 are enriched in low complexity; the sequence is SPTDSTPPST. Residues 1005–1015 are compositionally biased toward polar residues; sequence STPQISNIEST. Basic and acidic residues predominate over residues 1038-1053; the sequence is ESSHASKSKDFRHSDS. 2 stretches are compositionally biased toward polar residues: residues 1054-1082 and 1101-1111; these read YSEN…QISD and PENNSSHNIVP. The short motif at 1178–1212 is the Bipartite nuclear localization signal element; the sequence is KKRSLEDNETEIKVSRDTWNTKNMRSLEPPRSKKR. The region spanning 1338–1476 is the Reverse transcriptase Ty1/copia-type domain; the sequence is NNYYITQLDI…DILGLEIKYQ (139 aa). Mg(2+)-binding residues include Asp1346, Asp1427, Asp1428, Asp1610, Glu1652, and Asp1685. The RNase H Ty1/copia-type domain maps to 1610–1752; sequence DASYGNQPYY…IKTFKLLTNK (143 aa).

In terms of assembly, the capsid protein forms a homotrimer, from which the VLPs are assembled. The protease is a homodimer, whose active site consists of two apposed aspartic acid residues. In terms of processing, initially, virus-like particles (VLPs) are composed of the structural unprocessed proteins Gag and Gag-Pol, and also contain the host initiator methionine tRNA (tRNA(i)-Met) which serves as a primer for minus-strand DNA synthesis, and a dimer of genomic Ty RNA. Processing of the polyproteins occurs within the particle and proceeds by an ordered pathway, called maturation. First, the protease (PR) is released by autocatalytic cleavage of the Gag-Pol polyprotein yielding capsid protein p45 and a Pol-p154 precursor protein. This cleavage is a prerequisite for subsequent processing of Pol-p154 at the remaining sites to release the mature structural and catalytic proteins. Maturation takes place prior to the RT reaction and is required to produce transposition-competent VLPs.

It localises to the cytoplasm. It is found in the nucleus. It catalyses the reaction DNA(n) + a 2'-deoxyribonucleoside 5'-triphosphate = DNA(n+1) + diphosphate. It carries out the reaction Endonucleolytic cleavage to 5'-phosphomonoester.. Functionally, capsid protein (CA) is the structural component of the virus-like particle (VLP), forming the shell that encapsulates the retrotransposons dimeric RNA genome. The particles are assembled from trimer-clustered units and there are holes in the capsid shells that allow for the diffusion of macromolecules. CA also has nucleocapsid-like chaperone activity, promoting primer tRNA(i)-Met annealing to the multipartite primer-binding site (PBS), dimerization of Ty1 RNA and initiation of reverse transcription. The aspartyl protease (PR) mediates the proteolytic cleavages of the Gag and Gag-Pol polyproteins after assembly of the VLP. Its function is as follows. Reverse transcriptase/ribonuclease H (RT) is a multifunctional enzyme that catalyzes the conversion of the retro-elements RNA genome into dsDNA within the VLP. The enzyme displays a DNA polymerase activity that can copy either DNA or RNA templates, and a ribonuclease H (RNase H) activity that cleaves the RNA strand of RNA-DNA heteroduplexes during plus-strand synthesis and hydrolyzes RNA primers. The conversion leads to a linear dsDNA copy of the retrotransposon that includes long terminal repeats (LTRs) at both ends. In terms of biological role, integrase (IN) targets the VLP to the nucleus, where a subparticle preintegration complex (PIC) containing at least integrase and the newly synthesized dsDNA copy of the retrotransposon must transit the nuclear membrane. Once in the nucleus, integrase performs the integration of the dsDNA into the host genome. This is Transposon Ty1-PL Gag-Pol polyprotein (TY1B-PL) from Saccharomyces cerevisiae (strain ATCC 204508 / S288c) (Baker's yeast).